Reading from the N-terminus, the 387-residue chain is Protein FAM153B (387 aa).

Disordered stretches follow at residues 233 to 256 (SYNG…RGDL) and 327 to 374 (TITG…KKSR). Residues 336–345 (SASPSSAPAE) show a composition bias toward low complexity. The segment covering 347–359 (ATEKTKVEEEVKT) has biased composition (basic and acidic residues). Positions 360–374 (RKPKKKTRKPSKKSR) are enriched in basic residues.

Belongs to the FAM153 family.

This Homo sapiens (Human) protein is Protein FAM153B (FAM153B).